A 20-amino-acid chain; its full sequence is VSAKPAKXXVTAGEQAIAMT.

It belongs to the cytochrome c oxidase VIII family. In terms of assembly, component of the cytochrome c oxidase (complex IV, CIV), a multisubunit enzyme composed of 14 subunits. The complex is composed of a catalytic core of 3 subunits MT-CO1, MT-CO2 and MT-CO3, encoded in the mitochondrial DNA, and 11 supernumerary subunits COX4I, COX5A, COX5B, COX6A, COX6B, COX6C, COX7A, COX7B, COX7C, COX8 and NDUFA4, which are encoded in the nuclear genome. The complex exists as a monomer or a dimer and forms supercomplexes (SCs) in the inner mitochondrial membrane with NADH-ubiquinone oxidoreductase (complex I, CI) and ubiquinol-cytochrome c oxidoreductase (cytochrome b-c1 complex, complex III, CIII), resulting in different assemblies (supercomplex SCI(1)III(2)IV(1) and megacomplex MCI(2)III(2)IV(2)).

It localises to the mitochondrion inner membrane. Its pathway is energy metabolism; oxidative phosphorylation. Component of the cytochrome c oxidase, the last enzyme in the mitochondrial electron transport chain which drives oxidative phosphorylation. The respiratory chain contains 3 multisubunit complexes succinate dehydrogenase (complex II, CII), ubiquinol-cytochrome c oxidoreductase (cytochrome b-c1 complex, complex III, CIII) and cytochrome c oxidase (complex IV, CIV), that cooperate to transfer electrons derived from NADH and succinate to molecular oxygen, creating an electrochemical gradient over the inner membrane that drives transmembrane transport and the ATP synthase. Cytochrome c oxidase is the component of the respiratory chain that catalyzes the reduction of oxygen to water. Electrons originating from reduced cytochrome c in the intermembrane space (IMS) are transferred via the dinuclear copper A center (CU(A)) of subunit 2 and heme A of subunit 1 to the active site in subunit 1, a binuclear center (BNC) formed by heme A3 and copper B (CU(B)). The BNC reduces molecular oxygen to 2 water molecules using 4 electrons from cytochrome c in the IMS and 4 protons from the mitochondrial matrix. The chain is Cytochrome c oxidase subunit 8B, mitochondrial from Thunnus obesus (Bigeye tuna).